Here is a 370-residue protein sequence, read N- to C-terminus: Aminomethyltransferase (370 aa).

It belongs to the GcvT family. In terms of assembly, the glycine cleavage system is composed of four proteins: P, T, L and H.

It carries out the reaction N(6)-[(R)-S(8)-aminomethyldihydrolipoyl]-L-lysyl-[protein] + (6S)-5,6,7,8-tetrahydrofolate = N(6)-[(R)-dihydrolipoyl]-L-lysyl-[protein] + (6R)-5,10-methylene-5,6,7,8-tetrahydrofolate + NH4(+). The glycine cleavage system catalyzes the degradation of glycine. The chain is Aminomethyltransferase from Prochlorococcus marinus (strain MIT 9215).